The following is a 220-amino-acid chain: Glutathione S-transferase U23 (220 aa).

The region spanning 3–82 is the GST N-terminal domain; sequence EEIILLDYWA…YIDELWPDTN (80 aa). Glutathione is bound by residues 13–14, 39–40, 53–54, and 66–67; these read SM, NK, KI, and ES. The 121-residue stretch at 88–208 folds into the GST C-terminal domain; the sequence is DPYQRAQARF…LPDSDKVLKS (121 aa).

The protein belongs to the GST superfamily. Tau family.

Its subcellular location is the cytoplasm. The protein localises to the cytosol. It catalyses the reaction RX + glutathione = an S-substituted glutathione + a halide anion + H(+). Its function is as follows. May be involved in the conjugation of reduced glutathione to a wide number of exogenous and endogenous hydrophobic electrophiles and have a detoxification role against certain herbicides. The polypeptide is Glutathione S-transferase U23 (GSTU23) (Arabidopsis thaliana (Mouse-ear cress)).